The primary structure comprises 124 residues: UPF0102 protein PP_1324 (124 aa).

Belongs to the UPF0102 family.

The polypeptide is UPF0102 protein PP_1324 (Pseudomonas putida (strain ATCC 47054 / DSM 6125 / CFBP 8728 / NCIMB 11950 / KT2440)).